The primary structure comprises 720 residues: Polyribonucleotide nucleotidyltransferase (720 aa).

Residues aspartate 487 and aspartate 493 each contribute to the Mg(2+) site. The KH domain maps to 554-613; that stretch reads PRIETFKIPTDKIREVIGTGGKVIREIVEKTGAKINIEDDGTVKVASNDGEAMKAAIKWI. The S1 motif domain occupies 623-691; it reads GQIYEGTVVK…DRGKTRLSMK (69 aa). A disordered region spans residues 691–720; the sequence is KAVDQQTGEDLEAAGHKAEKADAPREAAGE. Residues 703 to 720 are compositionally biased toward basic and acidic residues; that stretch reads AAGHKAEKADAPREAAGE.

The protein belongs to the polyribonucleotide nucleotidyltransferase family. Mg(2+) is required as a cofactor.

It localises to the cytoplasm. It carries out the reaction RNA(n+1) + phosphate = RNA(n) + a ribonucleoside 5'-diphosphate. Its function is as follows. Involved in mRNA degradation. Catalyzes the phosphorolysis of single-stranded polyribonucleotides processively in the 3'- to 5'-direction. This is Polyribonucleotide nucleotidyltransferase from Nitrobacter hamburgensis (strain DSM 10229 / NCIMB 13809 / X14).